A 205-amino-acid chain; its full sequence is Urease accessory protein UreE (205 aa).

The disordered stretch occupies residues 171-205 (AHEAHPHAHSHAGGHGHVHSGHGHGGKHGEHDAES). Positions 177 to 196 (HAHSHAGGHGHVHSGHGHGG) are enriched in basic residues.

It belongs to the UreE family.

It is found in the cytoplasm. In terms of biological role, involved in urease metallocenter assembly. Binds nickel. Probably functions as a nickel donor during metallocenter assembly. In Bordetella bronchiseptica (strain ATCC BAA-588 / NCTC 13252 / RB50) (Alcaligenes bronchisepticus), this protein is Urease accessory protein UreE.